Here is a 135-residue protein sequence, read N- to C-terminus: MAEKFDHLEEHLEKFVENIRQLGIIVSDFQPSSQAGLNQKLNFIVTGLQDIDKCRQQLHDITVPLEVFEYIDQGRNPQLYTKECLERALAKNEQVKGKIDTMKKFKSLLIQGLSKVFPEDMAKYRSIRGEDHLPS.

It belongs to the Mediator complex subunit 10 family. In terms of assembly, component of the Mediator complex, which is composed of MED1, MED4, MED6, MED7, MED8, MED9, MED10, MED11, MED12, MED13, MED13L, MED14, MED15, MED16, MED17, MED18, MED19, MED20, MED21, MED22, MED23, MED24, MED25, MED26, MED27, MED29, MED30, MED31, CCNC, CDK8 and CDC2L6/CDK11. The MED12, MED13, CCNC and CDK8 subunits form a distinct module termed the CDK8 module. Mediator containing the CDK8 module is less active than Mediator lacking this module in supporting transcriptional activation. Individual preparations of the Mediator complex lacking one or more distinct subunits have been variously termed ARC, CRSP, DRIP, PC2, SMCC and TRAP.

The protein localises to the nucleus. Functionally, component of the Mediator complex, a coactivator involved in the regulated transcription of nearly all RNA polymerase II-dependent genes. Mediator functions as a bridge to convey information from gene-specific regulatory proteins to the basal RNA polymerase II transcription machinery. Mediator is recruited to promoters by direct interactions with regulatory proteins and serves as a scaffold for the assembly of a functional preinitiation complex with RNA polymerase II and the general transcription factors. The polypeptide is Mediator of RNA polymerase II transcription subunit 10 (MED10) (Macaca fascicularis (Crab-eating macaque)).